The sequence spans 174 residues: Adenine phosphoribosyltransferase (174 aa).

It belongs to the purine/pyrimidine phosphoribosyltransferase family. As to quaternary structure, homodimer.

It localises to the cytoplasm. The enzyme catalyses AMP + diphosphate = 5-phospho-alpha-D-ribose 1-diphosphate + adenine. It participates in purine metabolism; AMP biosynthesis via salvage pathway; AMP from adenine: step 1/1. In terms of biological role, catalyzes a salvage reaction resulting in the formation of AMP, that is energically less costly than de novo synthesis. This is Adenine phosphoribosyltransferase from Nitrosomonas eutropha (strain DSM 101675 / C91 / Nm57).